The chain runs to 267 residues: Small ribosomal subunit protein uS2 (267 aa).

Positions 247-267 (LEDDILEDVEDEEEGDPEQGE) are disordered.

The protein belongs to the universal ribosomal protein uS2 family.

The sequence is that of Small ribosomal subunit protein uS2 from Synechococcus sp. (strain JA-3-3Ab) (Cyanobacteria bacterium Yellowstone A-Prime).